A 482-amino-acid chain; its full sequence is 7-deoxyloganetic acid glucosyltransferase (482 aa).

Catalysis depends on His22, which acts as the Proton acceptor. His22 serves as a coordination point for an anthocyanidin. The active-site Charge relay is the Asp127. Residues Thr149, Ala362, Gln364, His379, Trp382, Asn383, Ser384, and Glu387 each contribute to the UDP-alpha-D-glucose site. Ala402 serves as a coordination point for an anthocyanidin. UDP-alpha-D-glucose is bound by residues Asp403 and Gln404.

It belongs to the UDP-glycosyltransferase family. In terms of tissue distribution, expressed in leaves, roots and stems. Lower levels of expression in flowers. Preferentially expressed in internal phloem parenchyma cells.

The enzyme catalyses 7-deoxyloganetate + UDP-alpha-D-glucose = 7-deoxyloganate + UDP + H(+). Functionally, iridoid glucosyltransferase acting exclusively on 7-deoxyloganetic acid. No activity with 7-deoxyloganetin. Catalyzes the fourth to last step in secologanin biosynthesis. The chain is 7-deoxyloganetic acid glucosyltransferase (UGT709C2) from Catharanthus roseus (Madagascar periwinkle).